A 555-amino-acid chain; its full sequence is Formate--tetrahydrofolate ligase (555 aa).

65–72 (TPAGEGKS) serves as a coordination point for ATP.

It belongs to the formate--tetrahydrofolate ligase family.

It carries out the reaction (6S)-5,6,7,8-tetrahydrofolate + formate + ATP = (6R)-10-formyltetrahydrofolate + ADP + phosphate. It participates in one-carbon metabolism; tetrahydrofolate interconversion. The polypeptide is Formate--tetrahydrofolate ligase (Lactococcus lactis subsp. lactis (strain IL1403) (Streptococcus lactis)).